Consider the following 270-residue polypeptide: Ribosomal RNA small subunit methyltransferase A (270 aa).

The S-adenosyl-L-methionine site is built by His-11, Leu-13, Gly-38, Glu-59, Asp-84, and Asn-109.

The protein belongs to the class I-like SAM-binding methyltransferase superfamily. rRNA adenine N(6)-methyltransferase family. RsmA subfamily.

It localises to the cytoplasm. The enzyme catalyses adenosine(1518)/adenosine(1519) in 16S rRNA + 4 S-adenosyl-L-methionine = N(6)-dimethyladenosine(1518)/N(6)-dimethyladenosine(1519) in 16S rRNA + 4 S-adenosyl-L-homocysteine + 4 H(+). Specifically dimethylates two adjacent adenosines (A1518 and A1519) in the loop of a conserved hairpin near the 3'-end of 16S rRNA in the 30S particle. May play a critical role in biogenesis of 30S subunits. The chain is Ribosomal RNA small subunit methyltransferase A from Crocosphaera subtropica (strain ATCC 51142 / BH68) (Cyanothece sp. (strain ATCC 51142)).